The sequence spans 354 residues: Rhodopsin (354 aa).

The Extracellular portion of the chain corresponds to 1-36 (MNGTEGPYFYVPMVNTTGIVRSPYEYPQYYLVSPAA). Residues N2 and N15 are each glycosylated (N-linked (GlcNAc...) asparagine). A helical transmembrane segment spans residues 37-61 (YACLGAYMFFLILVGFPINFLTLYV). Topologically, residues 62–73 (TIEHKKLRTPLN) are cytoplasmic. Residues 74–96 (YILLNLAVADLFMVFGGFTTTIY) traverse the membrane as a helical segment. Residues 97–110 (TSMHGYFVLGRLGC) are Extracellular-facing. Cysteines 110 and 187 form a disulfide. A helical membrane pass occupies residues 111 to 133 (NLEGYFATLGGEIGLWSLVVLAV). Positions 134 to 136 (ERW) match the 'Ionic lock' involved in activated form stabilization motif. Residues 134 to 152 (ERWLVVCKPISNFRFSENH) are Cytoplasmic-facing. The helical transmembrane segment at 153 to 173 (AIMGLVFTWIMANSCAAPPLL) threads the bilayer. Residues 174-202 (GWSRYIPEGMQCSCGVDYYTRAEGFNNES) are Extracellular-facing. The helical transmembrane segment at 203–224 (FVIYMFICHFCIPLIVVFFCYG) threads the bilayer. Residues 225–252 (RLLCAVKEAAAAQQESETTQRAEREVTR) are Cytoplasmic-facing. Residues 253 to 274 (MVVIMVIGFLVCWIPYASVAWY) form a helical membrane-spanning segment. The Extracellular segment spans residues 275-286 (IFTHQGSEFGPL). The helical transmembrane segment at 287–308 (FMTVPAFFAKSASIYNPLIYIC) threads the bilayer. At K296 the chain carries N6-(retinylidene)lysine. At 309-354 (MNKQFRHCMITTLCCGKNPFEEEEGASTTASKTEASSVSSSSVSPA) the chain is on the cytoplasmic side. Residues C322 and C323 are each lipidated (S-palmitoyl cysteine). Positions 333–354 (GASTTASKTEASSVSSSSVSPA) are disordered. The segment covering 334–354 (ASTTASKTEASSVSSSSVSPA) has biased composition (low complexity).

This sequence belongs to the G-protein coupled receptor 1 family. Opsin subfamily. Phosphorylated on some or all of the serine and threonine residues present in the C-terminal region. Post-translationally, contains one covalently linked retinal chromophore.

Its subcellular location is the membrane. It localises to the cell projection. The protein resides in the cilium. The protein localises to the photoreceptor outer segment. Its function is as follows. Photoreceptor required for image-forming vision at low light intensity. While most salt water fish species use retinal as chromophore, most freshwater fish use 3-dehydroretinal, or a mixture of retinal and 3-dehydroretinal. Light-induced isomerization of 11-cis to all-trans retinal triggers a conformational change that activates signaling via G-proteins. Subsequent receptor phosphorylation mediates displacement of the bound G-protein alpha subunit by arrestin and terminates signaling. This chain is Rhodopsin (rho), found in Poecilia reticulata (Guppy).